The sequence spans 146 residues: 3-hydroxyacyl-[acyl-carrier-protein] dehydratase FabZ (146 aa).

H49 is a catalytic residue.

This sequence belongs to the thioester dehydratase family. FabZ subfamily.

The protein resides in the cytoplasm. The catalysed reaction is a (3R)-hydroxyacyl-[ACP] = a (2E)-enoyl-[ACP] + H2O. Functionally, involved in unsaturated fatty acids biosynthesis. Catalyzes the dehydration of short chain beta-hydroxyacyl-ACPs and long chain saturated and unsaturated beta-hydroxyacyl-ACPs. In Wolbachia sp. subsp. Brugia malayi (strain TRS), this protein is 3-hydroxyacyl-[acyl-carrier-protein] dehydratase FabZ.